Consider the following 215-residue polypeptide: HTH-type transcriptional repressor FabR (215 aa).

One can recognise an HTH tetR-type domain in the interval 10-70; that stretch reads KTRRSLVEAA…TMVDESGLML (61 aa). The segment at residues 33–52 is a DNA-binding region (H-T-H motif); it reads SLREVAREAVIAPTSFYRHF.

As to quaternary structure, homodimer.

The protein resides in the cytoplasm. Its function is as follows. Represses the transcription of fabB, involved in unsaturated fatty acid (UFA) biosynthesis. By controlling UFA production, FabR directly influences the physical properties of the membrane bilayer. This Escherichia coli (strain K12 / MC4100 / BW2952) protein is HTH-type transcriptional repressor FabR.